The chain runs to 275 residues: Undecaprenyl-diphosphatase (275 aa).

The next 8 helical transmembrane spans lie at leucine 2–isoleucine 22, phenylalanine 43–tyrosine 63, tryptophan 83–leucine 103, methionine 111–leucine 131, valine 161–isoleucine 181, tyrosine 186–leucine 206, isoleucine 225–leucine 245, and proline 255–alanine 275.

The protein belongs to the UppP family.

The protein resides in the cell membrane. The catalysed reaction is di-trans,octa-cis-undecaprenyl diphosphate + H2O = di-trans,octa-cis-undecaprenyl phosphate + phosphate + H(+). Its function is as follows. Catalyzes the dephosphorylation of undecaprenyl diphosphate (UPP). Confers resistance to bacitracin. This Lactobacillus delbrueckii subsp. bulgaricus (strain ATCC 11842 / DSM 20081 / BCRC 10696 / JCM 1002 / NBRC 13953 / NCIMB 11778 / NCTC 12712 / WDCM 00102 / Lb 14) protein is Undecaprenyl-diphosphatase.